The chain runs to 1001 residues: uncharacterized protein (1001 aa).

Basic and acidic residues predominate over residues 939 to 948; the sequence is KVVDNKRDAS. The tract at residues 939–1001 is disordered; the sequence is KVVDNKRDAS…HTSKRVQKKN (63 aa). 2 positions are modified to phosphoserine: serine 948 and serine 950.

This is an uncharacterized protein from Schizosaccharomyces pombe (strain 972 / ATCC 24843) (Fission yeast).